We begin with the raw amino-acid sequence, 104 residues long: Transcription elongation factor A protein-like 9 (104 aa).

The interval Met1–Arg48 is disordered. The segment covering Gly9–Glu31 has biased composition (basic and acidic residues). A compositionally biased stretch (acidic residues) spans Gly32–Ser41.

The protein belongs to the TFS-II family. TFA subfamily.

It is found in the nucleus. Functionally, may be involved in transcriptional regulation. This is Transcription elongation factor A protein-like 9 (Tceal9) from Mus musculus (Mouse).